The sequence spans 137 residues: Partner of bursicon (137 aa).

Positions 1-24 (MNIMITKIFFLVQLFYIVVSKSSA) are cleaved as a signal peptide. Disulfide bonds link Cys28-Cys86, Cys52-Cys101, Cys61-Cys127, Cys65-Cys129, and Cys83-Cys132. The 96-residue stretch at 28-123 (CETVASEVHV…NALMEVRLRE (96 aa)) folds into the CTCK domain.

As to quaternary structure, heterodimer of burs and pburs.

The protein resides in the secreted. Functionally, final heterodimeric neurohormone released at the end of the molting cycle, involved in the sclerotization (tanning) of the insect cuticle, melanization and wing spreading. The polypeptide is Partner of bursicon (Bombyx mori (Silk moth)).